The chain runs to 219 residues: Large ribosomal subunit protein bL25 (219 aa).

The interval 195–219 is disordered; it reads EETTTTETSNEPEVIKKGKKEEEEK. Positions 197 to 206 are enriched in low complexity; sequence TTTTETSNEP. The segment covering 207-219 has biased composition (basic and acidic residues); that stretch reads EVIKKGKKEEEEK.

Belongs to the bacterial ribosomal protein bL25 family. CTC subfamily. As to quaternary structure, part of the 50S ribosomal subunit; part of the 5S rRNA/L5/L18/L25 subcomplex. Contacts the 5S rRNA. Binds to the 5S rRNA independently of L5 and L18.

This is one of the proteins that binds to the 5S RNA in the ribosome where it forms part of the central protuberance. The chain is Large ribosomal subunit protein bL25 from Fervidobacterium nodosum (strain ATCC 35602 / DSM 5306 / Rt17-B1).